A 318-amino-acid polypeptide reads, in one-letter code: Putative HTH-type transcriptional regulatory protein MJ1164 (318 aa).

In terms of domain architecture, HTH cro/C1-type spans 131–189; it reads LKEVREAMGISVGKLAEVAGVSRKAIYKYETQMANPSVDVALKIEEFLDVPLVKGIDLF. The segment at residues 142–161 is a DNA-binding region (H-T-H motif); it reads VGKLAEVAGVSRKAIYKYET.

The sequence is that of Putative HTH-type transcriptional regulatory protein MJ1164 from Methanocaldococcus jannaschii (strain ATCC 43067 / DSM 2661 / JAL-1 / JCM 10045 / NBRC 100440) (Methanococcus jannaschii).